The chain runs to 1470 residues: MIVRTVCRAKEKCLEKYKNILKYKEQLAKQDQKENETTSNNKDTSSSVPKPSNFRKTKVQNQYNRVFSIDEKVAEYEKILNDKVNMIDAIFNKAEKIRDLFIGTEPLTKELIKNELQYGAIVLNRASDLILAFADNNEPREPEFVLNTDMIVNDLKPLLHPTRIFDYSSFGFDDVNKLAINPKIRYLPNWSINYIRKCIQSFFTSNSNIEVQNLHNYSNHYDNRIYEHAMPNDVKLQILIGLDKMFNKLSIQHRFGTFETQILSCFFMKQKICEYEAYMHLPDCVNKSKKLKKGTETVCWQYLAEIIKHYEGIPFYHHTHSSKFGALDNTKISITTNKEVSCCLPSVMHGLLNGIIGELLCDLSTETALIYAKHLMNCSATSTYQRQLEFKDSFRMWPKLCYDSIGYALAVLYSKDMKPLEHRVEKIDSEFWFDEEEKDKLSSSLSKIPSYMKPFVNNAIQNCKKRGDYINQMICDINKIKLSREPNKFETHDLYLESGKNTEYLRWLTMTSTIISNFGIYNKTSLLLEYEKSISTKTKVMVQQPEPKVSLITEQGLQTPILHDWTKVPVLNEMSSLFDSEWKSTLVKEFEDINDFEKRFVTFLTNKSGGIKSEEPTLSKELKGISNARIIAFALNRNDYQIESKFLNMLIAHGKCAIRFQIDRRARVIVIVPNAIQSSELFLLLGFNVLKSDKRFNEKIAVGKQIGNLLDAKAQMISSGDVLSVKNSSDMKGMDAHTLPNLTLFLRRKMIEVLYELDPTGKCARYFFAEDKEYCLIQHHEKYHEQFVRRLRGPTIHAAKCLYYMFSMNMYLEDNFFSKGMNVSDQTFQSGFFATSAQHTLFLSLYLLNNERKYFSKLDNRMIRLLHSVMGDDVFEVIVNGVKYPNLVKEWLKLRNQGLSKINYEEDVSLSRLFGVFLQQAAILGVYVPYPARMSLFCDERSDTTKRHTLDMIKIVLEVLSSKSQRSYAIDNNISIGYAIWNCHRTSRYLYTDRDKSLIRRLVDHDANLDKLFVIDLSKFENSVRLVYPFVTIMTSPISWPMLYFAHFKIDDPNCTILTYRAKSPTSLNGDGAFLLINQMFFTSDEEHMFKFVEFVKHQDKVVRLKLSSDFLDWKERHTWGFTLGEHLLRFKRLRHLTESRKSELGLGEIEVMVHNLNKYLDSHRVQMSLDSFDQLRKNKITVPSSLMYVNHNRAKIEQSLTVRTETLDERASLDSTFLRHVFSYSIVPKDIEVLKTHALCAIKVRTYSDLKYALSVDGYLPESDDSSFNVILPFLPGYHQSSSYGRLFRYTTLPTVHDRDISGTMGEIVGGLGASFDIDSAIEFGAYVYNINRNLINAAASAIGIPQKFVSKYEQLVQAFIMNNFNLKYHSIFHNAKYFGLSGSLKKFSEYGGYSNKLIRFDTINKMEKFHNAFTRDLVFAYIDELNGRRVYLDYSIHSLLLIMSRGSIKYFTTHLYKLFNPLLSLELD.

The interval 28–55 (AKQDQKENETTSNNKDTSSSVPKPSNFR) is disordered. The span at 37–50 (TTSNNKDTSSSVPK) shows a compositional bias: polar residues.

It carries out the reaction RNA(n) + a ribonucleoside 5'-triphosphate = RNA(n+1) + diphosphate. In terms of biological role, RNA-directed RNA polymerase that is involved in transcription and genome replication. Following infection, it catalyzes the synthesis of fully conservative plus strands. After core assembly, which consists in recruitment of one capped plus-strand for each genomic segments and polymerase complexes, the polymerase switches mode and catalyzes the synthesis of complementary minus-strands. This is RNA-directed RNA polymerase VP1 (S1) from Saccharum officinarum (Sugarcane).